The primary structure comprises 763 residues: Phosphoglycerol transferase I (763 aa).

Transmembrane regions (helical) follow at residues 1–21 (MSEL…AWKA), 26–46 (WWFA…ITLF), 77–97 (ILPG…LGWI), and 108–128 (FGYS…SPAF).

This sequence belongs to the OpgB family.

The protein resides in the cell inner membrane. It catalyses the reaction a phosphatidylglycerol + a membrane-derived-oligosaccharide D-glucose = a 1,2-diacyl-sn-glycerol + a membrane-derived-oligosaccharide 6-(glycerophospho)-D-glucose.. The protein operates within glycan metabolism; osmoregulated periplasmic glucan (OPG) biosynthesis. Functionally, transfers a phosphoglycerol residue from phosphatidylglycerol to the membrane-bound nascent glucan backbones. The polypeptide is Phosphoglycerol transferase I (Escherichia coli O7:K1 (strain IAI39 / ExPEC)).